Here is a 594-residue protein sequence, read N- to C-terminus: Aspartate--tRNA(Asp/Asn) ligase (594 aa).

Glutamate 175 lines the L-aspartate pocket. The segment at 199–202 (QQFK) is aspartate. 2 residues coordinate L-aspartate: arginine 221 and histidine 455. An ATP-binding site is contributed by 221-223 (RDE). Glutamate 489 is a binding site for ATP. Arginine 496 contacts L-aspartate. 541-544 (GIDR) provides a ligand contact to ATP.

The protein belongs to the class-II aminoacyl-tRNA synthetase family. Type 1 subfamily. In terms of assembly, homodimer.

It is found in the cytoplasm. The catalysed reaction is tRNA(Asx) + L-aspartate + ATP = L-aspartyl-tRNA(Asx) + AMP + diphosphate. Its function is as follows. Aspartyl-tRNA synthetase with relaxed tRNA specificity since it is able to aspartylate not only its cognate tRNA(Asp) but also tRNA(Asn). Reaction proceeds in two steps: L-aspartate is first activated by ATP to form Asp-AMP and then transferred to the acceptor end of tRNA(Asp/Asn). The protein is Aspartate--tRNA(Asp/Asn) ligase of Pelagibacter ubique (strain HTCC1062).